The following is an 823-amino-acid chain: Protein Jade-3 (823 aa).

The segment at 1–32 (MKRHRPVSSSDSSDESPSTSFTSGSMYRIKSK) is disordered. The segment covering 8-25 (SSSDSSDESPSTSFTSGS) has biased composition (low complexity). N6-acetyllysine occurs at positions 30 and 32. Residue Ser-85 is modified to Phosphoserine. A PHD-type 1 zinc finger spans residues 200–250 (DVICDVCRSPDSEEGNDMVFCDKCNVCVHQACYGILKVPEGSWLCRSCVLG). Residues 252–286 (YPQCVLCPKKGGALKTTKTGTKWAHVSCALWIPEV) form a C2HC pre-PHD-type zinc finger. The PHD-type 2 zinc-finger motif lies at 310–366 (LVCNLCKLKTGACIQCSIKSCITAFHVTCAFEHGLEMKTILDEGDEVKFKSYCLKHS). Disordered regions lie at residues 372 to 395 (LGEA…KTSL) and 542 to 576 (KLKM…VHSI). A compositionally biased stretch (low complexity) spans 561–575 (DQQPHSPDSSSSVHS). Ser-566 is subject to Phosphoserine. Position 601 is an N6-acetyllysine (Lys-601). The residue at position 608 (Ser-608) is a Phosphoserine. The interval 609-630 (LSHSRSEAKESSPAWRTPSSEC) is disordered. Lys-638 is modified (N6-acetyllysine). Polar residues-rich tracts occupy residues 650–664 (SSIG…SKFA) and 673–684 (WSGNVTQKDSSS). Positions 650-684 (SSIGNGKSQPNSKFAKSNGLEGSWSGNVTQKDSSS) are disordered. Residue Lys-735 is modified to N6-acetyllysine. The tract at residues 758–823 (RAPYQENDGY…HPLSHSSMQR (66 aa)) is disordered. Residues Ser-774, Ser-776, and Ser-780 each carry the phosphoserine modification. Basic and acidic residues predominate over residues 781-809 (DGNKEKVRVRKDSSDRENPPHDSRRDCHG).

It belongs to the JADE family. Component of the HBO1 complex composed at least of ING4 or ING5, KAT7/HBO1, MEAF6, and one of JADE1, JADE2 and JADE3. In terms of tissue distribution, ubiquitously expressed, with highest levels in placenta and uterus.

Functionally, scaffold subunit of some HBO1 complexes, which have a histone H4 acetyltransferase activity. The protein is Protein Jade-3 (JADE3) of Homo sapiens (Human).